We begin with the raw amino-acid sequence, 191 residues long: GTP cyclohydrolase 1 (191 aa).

Residues C80, H83, and C151 each contribute to the Zn(2+) site.

Belongs to the GTP cyclohydrolase I family. In terms of assembly, toroid-shaped homodecamer, composed of two pentamers of five dimers.

The catalysed reaction is GTP + H2O = 7,8-dihydroneopterin 3'-triphosphate + formate + H(+). It participates in cofactor biosynthesis; 7,8-dihydroneopterin triphosphate biosynthesis; 7,8-dihydroneopterin triphosphate from GTP: step 1/1. This is GTP cyclohydrolase 1 from Nitrosospira multiformis (strain ATCC 25196 / NCIMB 11849 / C 71).